We begin with the raw amino-acid sequence, 701 residues long: DC-STAMP domain-containing protein 2 (701 aa).

The next 4 helical transmembrane spans lie at 15 to 35 (TCGF…ELLG), 40 to 60 (PFGC…GMGF), 82 to 102 (LLLL…NTLQ), and 215 to 235 (FPHL…LASL). N-linked (GlcNAc...) asparagine glycosylation is found at N272 and N284. 2 helical membrane-spanning segments follow: residues 310–330 (ALSL…IQAL) and 404–424 (LLIM…LDLA). N468 is a glycosylation site (N-linked (GlcNAc...) asparagine). Residues 488–508 (YIVIGTMYGLCFFVTLFGSYV) traverse the membrane as a helical segment. The disordered stretch occupies residues 673–701 (LQEALGTNLSDKSTSKPERAGNRNQDRKQ). Over residues 685–701 (STSKPERAGNRNQDRKQ) the composition is skewed to basic and acidic residues.

As to quaternary structure, interacts with DCST1. As to expression, expressed in testis.

The protein localises to the cytoplasmic vesicle. It is found in the secretory vesicle. It localises to the acrosome membrane. Essential sperm cell-surface protein required for sperm-egg fusion and fertilization. The sequence is that of DC-STAMP domain-containing protein 2 from Mus musculus (Mouse).